Reading from the N-terminus, the 313-residue chain is MNWVNDSIIQEFILLGFSDRPWLEFPLLVVFLISYTVTIFGNLTIILVSRLDTKLHTPMYFFLTNLSLLDLCYTTCTVPQMLVNLCSIRKVISYRGCVAQLFIFLALGATEYLLLAVMSFDRFVAICRPLHYSVIMHQRLCLQLAAASWVTGFSNSVWLSTLTLQLPLCDPYVIDHFLCEVPALLKLSCVETTANEAELFLVSELFHLIPLTLILISYAFIVRAVLRIQSAEGRQKAFGTCGSHLIVVSLFYSTAVSVYLQPPSPSSKDQGKMVSLFYGIIAPMLNPLIYTLRNKEVKEGFKRLVARVFLIKK.

Residues 1-25 (MNWVNDSIIQEFILLGFSDRPWLEF) lie on the Extracellular side of the membrane. N-linked (GlcNAc...) asparagine glycosylation is present at N5. A helical transmembrane segment spans residues 26–49 (PLLVVFLISYTVTIFGNLTIILVS). At 50–57 (RLDTKLHT) the chain is on the cytoplasmic side. Residues 58-79 (PMYFFLTNLSLLDLCYTTCTVP) traverse the membrane as a helical segment. Residues 80 to 100 (QMLVNLCSIRKVISYRGCVAQ) lie on the Extracellular side of the membrane. The cysteines at positions 97 and 189 are disulfide-linked. A helical membrane pass occupies residues 101-120 (LFIFLALGATEYLLLAVMSF). Topologically, residues 121 to 139 (DRFVAICRPLHYSVIMHQR) are cytoplasmic. A helical transmembrane segment spans residues 140 to 158 (LCLQLAAASWVTGFSNSVW). The Extracellular portion of the chain corresponds to 159–195 (LSTLTLQLPLCDPYVIDHFLCEVPALLKLSCVETTAN). A helical membrane pass occupies residues 196 to 219 (EAELFLVSELFHLIPLTLILISYA). Residues 220-236 (FIVRAVLRIQSAEGRQK) are Cytoplasmic-facing. A helical membrane pass occupies residues 237–259 (AFGTCGSHLIVVSLFYSTAVSVY). Residues 260-272 (LQPPSPSSKDQGK) are Extracellular-facing. A helical membrane pass occupies residues 273-292 (MVSLFYGIIAPMLNPLIYTL). At 293-313 (RNKEVKEGFKRLVARVFLIKK) the chain is on the cytoplasmic side.

Belongs to the G-protein coupled receptor 1 family.

It is found in the cell membrane. In terms of biological role, odorant receptor. The polypeptide is Olfactory receptor 2B6 (Homo sapiens (Human)).